Consider the following 375-residue polypeptide: Methylthioribose-1-phosphate isomerase (375 aa).

Substrate-binding positions include 53–55 (RGA), arginine 90, and glutamine 202. Aspartate 243 serves as the catalytic Proton donor. 253–254 (NK) is a substrate binding site.

It belongs to the eIF-2B alpha/beta/delta subunits family. MtnA subfamily.

The catalysed reaction is 5-(methylsulfanyl)-alpha-D-ribose 1-phosphate = 5-(methylsulfanyl)-D-ribulose 1-phosphate. The protein operates within amino-acid biosynthesis; L-methionine biosynthesis via salvage pathway; L-methionine from S-methyl-5-thio-alpha-D-ribose 1-phosphate: step 1/6. Functionally, catalyzes the interconversion of methylthioribose-1-phosphate (MTR-1-P) into methylthioribulose-1-phosphate (MTRu-1-P). The protein is Methylthioribose-1-phosphate isomerase of Rhodospirillum centenum (strain ATCC 51521 / SW).